We begin with the raw amino-acid sequence, 515 residues long: Na(+)/H(+) antiporter NhaB (515 aa).

A run of 13 helical transmembrane segments spans residues 23 to 43, 44 to 64, 88 to 108, 119 to 139, 143 to 163, 202 to 222, 238 to 258, 303 to 323, 324 to 344, 357 to 377, 389 to 409, 447 to 467, and 477 to 497; these read IIVF…FIAG, WCLV…YPLQ, IMAS…IYFM, LLIT…SAAF, FLDA…FYGV, LMMH…VGEP, FFIR…ITCV, GIIG…VGLI, GLSV…STIG, LVVF…GPII, LLLF…VFVA, ATPN…APLI, and MALP…EYIL.

Belongs to the NhaB Na(+)/H(+) (TC 2.A.34) antiporter family.

The protein resides in the cell inner membrane. The enzyme catalyses 2 Na(+)(in) + 3 H(+)(out) = 2 Na(+)(out) + 3 H(+)(in). In terms of biological role, na(+)/H(+) antiporter that extrudes sodium in exchange for external protons. This is Na(+)/H(+) antiporter NhaB from Mannheimia succiniciproducens (strain KCTC 0769BP / MBEL55E).